Consider the following 325-residue polypeptide: LIM and senescent cell antigen-like-containing domain protein 1 (325 aa).

An N-acetylalanine modification is found at Ala-2. 5 consecutive LIM zinc-binding domains span residues 10-62 (CERC…CEHD), 71-121 (CHQC…CRPC), 135-184 (CQKC…CLPC), 193-243 (CGAC…CETH), and 252-303 (CFHC…CKKC).

As to quaternary structure, component of the heterotrimeric IPP (ILK-PINCH-PARVIN) complex composed of ILK, LIMS1/PINCH and PARVA; the complex binds to F-actin via the C-terminal tail of LIMS1 and the N-terminal region of PARVA, promoting F-actin filament bundling. Formation of the IPP complex is dependent on protein kinase C and precedes integrin-mediated cell adhesion and spreading. Competes with LIMS2 for interaction with ILK. Interacts (via LIM zinc-binding 5) with TGFB1I1. Interacts with SH3/SH2 adapter NCK2, thereby linking the complex to cell surface receptors. In terms of tissue distribution, expressed in most tissues except in the brain.

It localises to the cell junction. The protein resides in the focal adhesion. The protein localises to the cell membrane. In terms of biological role, within the IPP (ILK-PINCH-PARVIN) complex, binds to F-actin, promoting F-actin bundling, a process required to generate force for actin cytoskeleton reorganization and subsequent dynamic cell adhesion events such as cell spreading and migration. The polypeptide is LIM and senescent cell antigen-like-containing domain protein 1 (LIMS1) (Homo sapiens (Human)).